The sequence spans 227 residues: Small ribosomal subunit protein uS3 (227 aa).

One can recognise a KH type-2 domain in the interval 39 to 107 (VREFLDKRLV…PVHINIEEVR (69 aa)).

The protein belongs to the universal ribosomal protein uS3 family. In terms of assembly, part of the 30S ribosomal subunit. Forms a tight complex with proteins S10 and S14.

Binds the lower part of the 30S subunit head. Binds mRNA in the 70S ribosome, positioning it for translation. The chain is Small ribosomal subunit protein uS3 from Marinobacter nauticus (strain ATCC 700491 / DSM 11845 / VT8) (Marinobacter aquaeolei).